Here is a 457-residue protein sequence, read N- to C-terminus: Multidrug resistance protein MdtK (457 aa).

Topologically, residues 1–10 (MQKYISEARL) are cytoplasmic. Residues 11-31 (LLALAIPVILAQIAQTAMGFV) form a helical membrane-spanning segment. The Periplasmic portion of the chain corresponds to 32–52 (DTVMAGGYSATDMAAVAIGTS). Residues 53–73 (IWLPAILFGHGLLLALTPVIA) form a helical membrane-spanning segment. Over 74–92 (QLNGSGRRERIAHQVRQGF) the chain is Cytoplasmic. A helical transmembrane segment spans residues 93–113 (WLAGFVSVLIMLVLWNAGYII). The Periplasmic portion of the chain corresponds to 114–126 (RYMENIDPALADK). The helical transmembrane segment at 127 to 147 (AVGYLRALLWGAPGYLFFQVA) threads the bilayer. The Cytoplasmic portion of the chain corresponds to 148–159 (RNQCEGLAKAKP). The chain crosses the membrane as a helical span at residues 160–180 (GMVMGFIGLLVNIPVNYIFIY). Residues 181 to 188 (GHFGMPEL) are Periplasmic-facing. Residues 189–209 (GGVGCGVATAAVYWVMFLAMV) form a helical membrane-spanning segment. Residues 210–242 (SYIKRARSMRDIRNEKGTAKPEPAVMKRLIQLG) lie on the Cytoplasmic side of the membrane. The helical transmembrane segment at 243 to 263 (LPIALALFLEVTLFAVVALLV) threads the bilayer. Topologically, residues 264–275 (SPLGIVDVAGHQ) are periplasmic. Residues 276-296 (IALNFSSLMFVLPMSLAAAVT) traverse the membrane as a helical segment. Topologically, residues 297-313 (IRVGYRLGQGSTLDAQT) are cytoplasmic. The helical transmembrane segment at 314–334 (AARTGLMVGVCMATLTAIFTV) threads the bilayer. Residues 335-349 (SLREQIALLYNDNPE) lie on the Periplasmic side of the membrane. Residues 350-370 (VVTLAAHLMLLAAVYQISDSI) traverse the membrane as a helical segment. The Cytoplasmic portion of the chain corresponds to 371–386 (QVIGSGILRGYKDTRS). A helical membrane pass occupies residues 387-407 (IFYITFTAYWVLGLPSGYILA). The Periplasmic segment spans residues 408-417 (LTDLVVEPMG). A helical membrane pass occupies residues 418–438 (PAGFWIGFIIGLTSAAIMMML). The Cytoplasmic segment spans residues 439–457 (RMRFLQRMPSAIILQRASR).

It belongs to the multi antimicrobial extrusion (MATE) (TC 2.A.66.1) family. MdtK subfamily.

It localises to the cell inner membrane. Multidrug efflux pump that functions probably as a Na(+)/drug antiporter. The protein is Multidrug resistance protein MdtK of Shigella flexneri serotype 5b (strain 8401).